Here is a 284-residue protein sequence, read N- to C-terminus: UPF0354 protein SERP1303 (284 aa).

The protein belongs to the UPF0354 family.

The polypeptide is UPF0354 protein SERP1303 (Staphylococcus epidermidis (strain ATCC 35984 / DSM 28319 / BCRC 17069 / CCUG 31568 / BM 3577 / RP62A)).